The chain runs to 399 residues: S-adenosylmethionine synthase (399 aa).

Residue His-16 participates in ATP binding. Mg(2+) is bound at residue Asp-18. Residue Glu-44 participates in K(+) binding. L-methionine contacts are provided by Glu-57 and Gln-100. The interval 100–110 (QSSDIAQGVNE) is flexible loop. Residues 177 to 179 (DAK), 244 to 245 (RF), Asp-253, 259 to 260 (RK), Ala-276, and Lys-280 contribute to the ATP site. Residue Asp-253 participates in L-methionine binding. Lys-284 is a binding site for L-methionine.

It belongs to the AdoMet synthase family. As to quaternary structure, homotetramer; dimer of dimers. Mg(2+) serves as cofactor. Requires K(+) as cofactor.

The protein resides in the cytoplasm. It carries out the reaction L-methionine + ATP + H2O = S-adenosyl-L-methionine + phosphate + diphosphate. Its pathway is amino-acid biosynthesis; S-adenosyl-L-methionine biosynthesis; S-adenosyl-L-methionine from L-methionine: step 1/1. Its function is as follows. Catalyzes the formation of S-adenosylmethionine (AdoMet) from methionine and ATP. The overall synthetic reaction is composed of two sequential steps, AdoMet formation and the subsequent tripolyphosphate hydrolysis which occurs prior to release of AdoMet from the enzyme. This Lactococcus lactis subsp. lactis (strain IL1403) (Streptococcus lactis) protein is S-adenosylmethionine synthase.